The following is a 437-amino-acid chain: Trigger factor (437 aa).

A PPIase FKBP-type domain is found at 161-246 (GDRVNIDFKG…VNKVEGKALP (86 aa)).

The protein belongs to the FKBP-type PPIase family. Tig subfamily.

It localises to the cytoplasm. It carries out the reaction [protein]-peptidylproline (omega=180) = [protein]-peptidylproline (omega=0). Its function is as follows. Involved in protein export. Acts as a chaperone by maintaining the newly synthesized protein in an open conformation. Functions as a peptidyl-prolyl cis-trans isomerase. This is Trigger factor from Alcanivorax borkumensis (strain ATCC 700651 / DSM 11573 / NCIMB 13689 / SK2).